The following is a 434-amino-acid chain: ATP-dependent RNA helicase RhlB (434 aa).

Positions 9-37 (KKFADFPLKPEILAALNENGFEFCTPIQA) match the Q motif motif. Residues 40-219 (LPILLNAKDI…YDHMNDPEKV (180 aa)) enclose the Helicase ATP-binding domain. Residue 53-60 (AQTGTGKT) participates in ATP binding. Residues 165 to 168 (DEAD) carry the DEAD box motif. One can recognise a Helicase C-terminal domain in the interval 243–390 (KMRLLLSLIE…VSNYDKDALL (148 aa)). A disordered region spans residues 390–434 (LDDIPPPARIHRKPPTSRTRDGGSKGAHRSGGNTSRPPRHRTRRP).

Belongs to the DEAD box helicase family. RhlB subfamily. In terms of assembly, component of the RNA degradosome, which is a multiprotein complex involved in RNA processing and mRNA degradation.

The protein localises to the cytoplasm. The catalysed reaction is ATP + H2O = ADP + phosphate + H(+). DEAD-box RNA helicase involved in RNA degradation. Has RNA-dependent ATPase activity and unwinds double-stranded RNA. This Shewanella frigidimarina (strain NCIMB 400) protein is ATP-dependent RNA helicase RhlB.